Here is a 646-residue protein sequence, read N- to C-terminus: Tyrosine-protein kinase MasK (646 aa).

Topologically, residues 1–415 (MSPPQTTLPV…PTAGGRRWRT (415 aa)) are periplasmic. In terms of domain architecture, Protein kinase spans 25 to 300 (YVLVRKLAEG…AFADALETFL (276 aa)). Residues 31-39 (LAEGGMAEI) and K57 each bind ATP. The Proton acceptor role is filled by D163. Residues 373–410 (TSAQRPGMSMRPSSPGVPAHGAASRGSTSPESAPTAGG) form a disordered region. The chain crosses the membrane as a helical span at residues 416 to 433 (LAVGLAGGLMLAAAGIVG). Residues 434–646 (YRQWMTTPAS…VMPFSWRVTQ (213 aa)) are Cytoplasmic-facing. The segment at 521-547 (AGAASDVEAEADEEGADAAPVRSKKAS) is disordered. Acidic residues predominate over residues 527 to 536 (VEAEADEEGA).

Belongs to the protein kinase superfamily. Tyr protein kinase family. As to quaternary structure, interacts with MglA. In terms of processing, autophosphorylated.

Its subcellular location is the cell inner membrane. The enzyme catalyses L-tyrosyl-[protein] + ATP = O-phospho-L-tyrosyl-[protein] + ADP + H(+). Essential for growth. Interacts with MglA to control social gliding motility. The protein is Tyrosine-protein kinase MasK (masK) of Myxococcus xanthus (strain DK1622).